The sequence spans 94 residues: Integration host factor subunit beta (94 aa).

Belongs to the bacterial histone-like protein family. As to quaternary structure, heterodimer of an alpha and a beta chain.

Its function is as follows. This protein is one of the two subunits of integration host factor, a specific DNA-binding protein that functions in genetic recombination as well as in transcriptional and translational control. The polypeptide is Integration host factor subunit beta (Yersinia pseudotuberculosis serotype O:1b (strain IP 31758)).